A 249-amino-acid polypeptide reads, in one-letter code: Structural protein VP10 (249 aa).

The protein resides in the virion. Its function is as follows. Forms the virion spike 'foot' and helps anchor the VP9 spike 'head' protein in the virion. In Banna virus (BAV), this protein is Structural protein VP10 (Segment-10).